Here is a 330-residue protein sequence, read N- to C-terminus: MAEAAIDPRCEEQEELHAEDSEGLTTQWREEDEEEAAREQRQRERERQLQDQDKDKEDDGGHSLEQPGQQTLISLKSSELDEDEGFGDWSQKPEPRQQFWGNEGTAEGTEPSQSERPEEKQTEESSHQAKVHLEESNLSYREPDPEDAVGGSGEAEEHLIRHQVRTPSPLALEDTVELSSPPLSPTTKLADRTESLNRSIKKSNSVKKSQPTLPISTIDERLQQYTQATESSGRTPKLSRQPSIELPSMAVASTKTLWETGEVQSQSASKTPSCQDIVAGDMSKKSLWEQKGGSKISSTIKSTPSGKRYKFVATGHGKYEKVLVDEGSAP.

Basic and acidic residues-rich tracts occupy residues 1–20 (MAEA…HAED) and 37–62 (AREQ…DGGH). 2 disordered regions span residues 1-246 (MAEA…SIEL) and 281-302 (DMSK…TIKS). The segment covering 66–77 (QPGQQTLISLKS) has biased composition (polar residues). Phosphoserine; by CK2 occurs at positions 77 and 78. A compositionally biased stretch (basic and acidic residues) spans 113–135 (QSERPEEKQTEESSHQAKVHLEE). Threonine 166 carries the phosphothreonine modification. Phosphoserine occurs at positions 168, 179, 180, and 184. 2 stretches are compositionally biased toward polar residues: residues 206 to 215 (VKKSQPTLPI) and 223 to 242 (QQYT…SRQP). Serine 243 is modified (phosphoserine; by MAPKAPK2). Positions 291–302 (KGGSKISSTIKS) are enriched in low complexity. An N6-acetyllysine modification is found at lysine 318.

Phosphorylated by casein kinase II, protein kinase C and MAPKAPK2. Phosphorylation by PKC induces translocation from membrane to cytoplasm. Phosphorylation by MAPKAPK2 may regulate neutrophil chemotaxis. As to expression, isoform 1 is expressed in normal mouse B and T-lymphocytes and in transformed B-cells but not (or in smaller amounts) in nine T-lymphoma lines tested. Isoform 2 is expressed in non-lymphoid cell lines (myocytes, stromal cells, fibroblasts).

It is found in the cell membrane. In terms of biological role, may play a role in mediating neutrophil activation and chemotaxis. The polypeptide is Lymphocyte-specific protein 1 (Lsp1) (Mus musculus (Mouse)).